Reading from the N-terminus, the 394-residue chain is Chorismate synthase (394 aa).

NADP(+) is bound by residues Arg42 and Arg48. FMN-binding positions include 137-139 (RAS), 258-259 (QA), Gly302, 317-321 (KPIAT), and Arg343.

This sequence belongs to the chorismate synthase family. As to quaternary structure, homotetramer. The cofactor is FMNH2.

The enzyme catalyses 5-O-(1-carboxyvinyl)-3-phosphoshikimate = chorismate + phosphate. The protein operates within metabolic intermediate biosynthesis; chorismate biosynthesis; chorismate from D-erythrose 4-phosphate and phosphoenolpyruvate: step 7/7. In terms of biological role, catalyzes the anti-1,4-elimination of the C-3 phosphate and the C-6 proR hydrogen from 5-enolpyruvylshikimate-3-phosphate (EPSP) to yield chorismate, which is the branch point compound that serves as the starting substrate for the three terminal pathways of aromatic amino acid biosynthesis. This reaction introduces a second double bond into the aromatic ring system. The sequence is that of Chorismate synthase from Streptomyces avermitilis (strain ATCC 31267 / DSM 46492 / JCM 5070 / NBRC 14893 / NCIMB 12804 / NRRL 8165 / MA-4680).